Consider the following 209-residue polypeptide: Redox-sensing transcriptional repressor Rex (209 aa).

Residues 16–55 constitute a DNA-binding region (H-T-H motif); sequence LYYRFIQNLSLSGKQRVSSAELSEAVKVDSATIRRDFSYF. An NAD(+)-binding site is contributed by 90–95; that stretch reads GVGNLG.

This sequence belongs to the transcriptional regulatory Rex family. Homodimer.

The protein localises to the cytoplasm. In terms of biological role, modulates transcription in response to changes in cellular NADH/NAD(+) redox state. The chain is Redox-sensing transcriptional repressor Rex from Bacillus cereus (strain G9842).